Reading from the N-terminus, the 807-residue chain is uncharacterized protein (807 aa).

Residues 1–18 form the signal peptide; it reads MNTVLFVILLAAIGSNHG. At 19-704 the chain is on the extracellular side; sequence LIDERLTVNR…GLFTDIFGGE (686 aa). The segment covering 133 to 142 has biased composition (polar residues); the sequence is TTTTAAPQTG. Residues 133–171 form a disordered region; that stretch reads TTTTAAPQTGNRRRRRAAGDEPNTDDNTPPNLEIPDWLD. 2 N-linked (GlcNAc...) asparagine; by host glycosylation sites follow: N277 and N660. Residues 705–725 traverse the membrane as a helical segment; that stretch reads VWAVIAAIFSPVFLTAFALII. Residues 726–807 are Cytoplasmic-facing; sequence SLINFIPAVR…GERQVISRTN (82 aa).

It is found in the host membrane. This is an uncharacterized protein from Magallana gigas (Pacific oyster).